Consider the following 343-residue polypeptide: Holliday junction branch migration complex subunit RuvB (343 aa).

The large ATPase domain (RuvB-L) stretch occupies residues 1–181 (MDRIIDTAAT…FGIVQRLEFY (181 aa)). ATP-binding positions include I20, R21, G62, K65, T66, T67, 128–130 (EDF), R171, Y181, and R218. T66 provides a ligand contact to Mg(2+). The tract at residues 182–252 (SPEDLARIVR…VAQAAMQMLK (71 aa)) is small ATPAse domain (RuvB-S). Residues 255–343 (QGGFDELDRR…SAFTDPEDLF (89 aa)) form a head domain (RuvB-H) region. DNA is bound by residues R291, R310, and R315.

Belongs to the RuvB family. Homohexamer. Forms an RuvA(8)-RuvB(12)-Holliday junction (HJ) complex. HJ DNA is sandwiched between 2 RuvA tetramers; dsDNA enters through RuvA and exits via RuvB. An RuvB hexamer assembles on each DNA strand where it exits the tetramer. Each RuvB hexamer is contacted by two RuvA subunits (via domain III) on 2 adjacent RuvB subunits; this complex drives branch migration. In the full resolvosome a probable DNA-RuvA(4)-RuvB(12)-RuvC(2) complex forms which resolves the HJ.

It is found in the cytoplasm. The enzyme catalyses ATP + H2O = ADP + phosphate + H(+). In terms of biological role, the RuvA-RuvB-RuvC complex processes Holliday junction (HJ) DNA during genetic recombination and DNA repair, while the RuvA-RuvB complex plays an important role in the rescue of blocked DNA replication forks via replication fork reversal (RFR). RuvA specifically binds to HJ cruciform DNA, conferring on it an open structure. The RuvB hexamer acts as an ATP-dependent pump, pulling dsDNA into and through the RuvAB complex. RuvB forms 2 homohexamers on either side of HJ DNA bound by 1 or 2 RuvA tetramers; 4 subunits per hexamer contact DNA at a time. Coordinated motions by a converter formed by DNA-disengaged RuvB subunits stimulates ATP hydrolysis and nucleotide exchange. Immobilization of the converter enables RuvB to convert the ATP-contained energy into a lever motion, pulling 2 nucleotides of DNA out of the RuvA tetramer per ATP hydrolyzed, thus driving DNA branch migration. The RuvB motors rotate together with the DNA substrate, which together with the progressing nucleotide cycle form the mechanistic basis for DNA recombination by continuous HJ branch migration. Branch migration allows RuvC to scan DNA until it finds its consensus sequence, where it cleaves and resolves cruciform DNA. In Xylella fastidiosa (strain 9a5c), this protein is Holliday junction branch migration complex subunit RuvB.